Reading from the N-terminus, the 395-residue chain is 8-amino-7-oxononanoate synthase (395 aa).

K24 lines the substrate pocket. A pyridoxal 5'-phosphate-binding site is contributed by 111–112 (GF). Substrate is bound at residue H136. Pyridoxal 5'-phosphate-binding positions include S184, 209 to 212 (DDAH), and 240 to 243 (TLSK). Residue K243 is modified to N6-(pyridoxal phosphate)lysine. T357 lines the substrate pocket.

Belongs to the class-II pyridoxal-phosphate-dependent aminotransferase family. BioF subfamily. In terms of assembly, homodimer. Pyridoxal 5'-phosphate is required as a cofactor.

It catalyses the reaction 6-carboxyhexanoyl-[ACP] + L-alanine + H(+) = (8S)-8-amino-7-oxononanoate + holo-[ACP] + CO2. It participates in cofactor biosynthesis; biotin biosynthesis. Its function is as follows. Catalyzes the decarboxylative condensation of pimeloyl-[acyl-carrier protein] and L-alanine to produce 8-amino-7-oxononanoate (AON), [acyl-carrier protein], and carbon dioxide. This chain is 8-amino-7-oxononanoate synthase, found in Treponema denticola (strain ATCC 35405 / DSM 14222 / CIP 103919 / JCM 8153 / KCTC 15104).